The primary structure comprises 126 residues: Putative 15 kDa capsid protein (126 aa).

It is found in the virion. This is Putative 15 kDa capsid protein (P15) from Bombyx mori nuclear polyhedrosis virus (BmNPV).